Here is a 291-residue protein sequence, read N- to C-terminus: Phosphatidylglycerol--prolipoprotein diacylglyceryl transferase (291 aa).

The next 4 helical transmembrane spans lie at 24-44, 64-84, 99-119, and 125-145; these read WYAL…RALL, FILW…VLFY, IWKG…AVIL, and GLPI…GLFL. An a 1,2-diacyl-sn-glycero-3-phospho-(1'-sn-glycerol)-binding site is contributed by arginine 147. 3 consecutive transmembrane segments (helical) span residues 187–207, 211–231, and 247–267; these read ATLE…AGAL, GLVL…GEFF, and MGML…CVAW.

Belongs to the Lgt family.

The protein localises to the cell inner membrane. It carries out the reaction L-cysteinyl-[prolipoprotein] + a 1,2-diacyl-sn-glycero-3-phospho-(1'-sn-glycerol) = an S-1,2-diacyl-sn-glyceryl-L-cysteinyl-[prolipoprotein] + sn-glycerol 1-phosphate + H(+). It participates in protein modification; lipoprotein biosynthesis (diacylglyceryl transfer). In terms of biological role, catalyzes the transfer of the diacylglyceryl group from phosphatidylglycerol to the sulfhydryl group of the N-terminal cysteine of a prolipoprotein, the first step in the formation of mature lipoproteins. In Nitrobacter hamburgensis (strain DSM 10229 / NCIMB 13809 / X14), this protein is Phosphatidylglycerol--prolipoprotein diacylglyceryl transferase.